A 379-amino-acid polypeptide reads, in one-letter code: tRNA-specific 2-thiouridylase MnmA (379 aa).

ATP is bound by residues 23 to 30 and Leu49; that span reads AMSGGVDS. Residue Cys117 is the Nucleophile of the active site. Cys117 and Cys214 are oxidised to a cystine. Gly141 contacts ATP. The segment at 163 to 165 is interaction with tRNA; sequence RDQ. Cys214 (cysteine persulfide intermediate) is an active-site residue.

The protein belongs to the MnmA/TRMU family.

It is found in the cytoplasm. The enzyme catalyses S-sulfanyl-L-cysteinyl-[protein] + uridine(34) in tRNA + AH2 + ATP = 2-thiouridine(34) in tRNA + L-cysteinyl-[protein] + A + AMP + diphosphate + H(+). Catalyzes the 2-thiolation of uridine at the wobble position (U34) of tRNA, leading to the formation of s(2)U34. The polypeptide is tRNA-specific 2-thiouridylase MnmA (Cereibacter sphaeroides (strain ATCC 17029 / ATH 2.4.9) (Rhodobacter sphaeroides)).